Here is a 123-residue protein sequence, read N- to C-terminus: Large ribosomal subunit protein bL12 (123 aa).

The protein belongs to the bacterial ribosomal protein bL12 family. As to quaternary structure, homodimer. Part of the ribosomal stalk of the 50S ribosomal subunit. Forms a multimeric L10(L12)X complex, where L10 forms an elongated spine to which 2 to 4 L12 dimers bind in a sequential fashion. Binds GTP-bound translation factors.

Functionally, forms part of the ribosomal stalk which helps the ribosome interact with GTP-bound translation factors. Is thus essential for accurate translation. This chain is Large ribosomal subunit protein bL12, found in Mycoplasmopsis agalactiae (strain NCTC 10123 / CIP 59.7 / PG2) (Mycoplasma agalactiae).